Reading from the N-terminus, the 430-residue chain is 3-phosphoshikimate 1-carboxyvinyltransferase (430 aa).

3-phosphoshikimate-binding residues include Lys-20, Ser-21, and Arg-25. Lys-20 serves as a coordination point for phosphoenolpyruvate. Positions 92 and 120 each coordinate phosphoenolpyruvate. 3-phosphoshikimate is bound by residues Ser-166, Gln-168, Asp-312, and Lys-339. Gln-168 is a binding site for phosphoenolpyruvate. The active-site Proton acceptor is Asp-312. The phosphoenolpyruvate site is built by Arg-343 and Arg-387.

Belongs to the EPSP synthase family. In terms of assembly, monomer.

The protein resides in the cytoplasm. It catalyses the reaction 3-phosphoshikimate + phosphoenolpyruvate = 5-O-(1-carboxyvinyl)-3-phosphoshikimate + phosphate. The protein operates within metabolic intermediate biosynthesis; chorismate biosynthesis; chorismate from D-erythrose 4-phosphate and phosphoenolpyruvate: step 6/7. Functionally, catalyzes the transfer of the enolpyruvyl moiety of phosphoenolpyruvate (PEP) to the 5-hydroxyl of shikimate-3-phosphate (S3P) to produce enolpyruvyl shikimate-3-phosphate and inorganic phosphate. The sequence is that of 3-phosphoshikimate 1-carboxyvinyltransferase from Lactococcus lactis subsp. cremoris (strain SK11).